A 421-amino-acid polypeptide reads, in one-letter code: Probable pectate lyase C (421 aa).

An N-terminal signal peptide occupies residues 1–19; the sequence is MQPLHTLLALLPLCRSTTA. Asn-164 and Asn-201 each carry an N-linked (GlcNAc...) asparagine glycan. The active site involves Arg-204. One can recognise an EF-hand domain in the interval 257–292; that stretch reads NENFHGYVENNYYDPDQDGTLNGNELGVSSSNYGGM. Ca(2+) contacts are provided by Asp-270, Asp-272, Asp-274, Thr-276, and Glu-281. The interval 353–376 is disordered; it reads DFGGVGDLDGGETPTDTDGDGIPD. Over residues 367–376 the composition is skewed to acidic residues; that stretch reads TDTDGDGIPD.

This sequence belongs to the polysaccharide lyase 1 family. Ca(2+) is required as a cofactor.

It localises to the secreted. It catalyses the reaction Eliminative cleavage of (1-&gt;4)-alpha-D-galacturonan to give oligosaccharides with 4-deoxy-alpha-D-galact-4-enuronosyl groups at their non-reducing ends.. Functionally, pectinolytic enzyme consist of four classes of enzymes: pectin lyase, polygalacturonase, pectin methylesterase and rhamnogalacturonase. Among pectinolytic enzymes, pectin lyase is the most important in depolymerization of pectin, since it cleaves internal glycosidic bonds of highly methylated pectins. Favors pectate, the anion, over pectin, the methyl ester. The polypeptide is Probable pectate lyase C (plyC) (Emericella nidulans (strain FGSC A4 / ATCC 38163 / CBS 112.46 / NRRL 194 / M139) (Aspergillus nidulans)).